A 444-amino-acid polypeptide reads, in one-letter code: Ribulose bisphosphate carboxylase large chain (444 aa).

An N6,N6,N6-trimethyllysine modification is found at lysine 7. Residues asparagine 116 and threonine 166 each coordinate substrate. Lysine 168 (proton acceptor) is an active-site residue. Lysine 170 serves as a coordination point for substrate. Mg(2+)-binding residues include lysine 194, aspartate 196, and glutamate 197. At lysine 194 the chain carries N6-carboxylysine. Histidine 287 serves as the catalytic Proton acceptor. Residues arginine 288, histidine 320, and serine 372 each contribute to the substrate site.

The protein belongs to the RuBisCO large chain family. Type I subfamily. Heterohexadecamer of 8 large chains and 8 small chains; disulfide-linked. The disulfide link is formed within the large subunit homodimers. Requires Mg(2+) as cofactor. Post-translationally, the disulfide bond which can form in the large chain dimeric partners within the hexadecamer appears to be associated with oxidative stress and protein turnover.

The protein resides in the plastid. Its subcellular location is the chloroplast. It carries out the reaction 2 (2R)-3-phosphoglycerate + 2 H(+) = D-ribulose 1,5-bisphosphate + CO2 + H2O. It catalyses the reaction D-ribulose 1,5-bisphosphate + O2 = 2-phosphoglycolate + (2R)-3-phosphoglycerate + 2 H(+). In terms of biological role, ruBisCO catalyzes two reactions: the carboxylation of D-ribulose 1,5-bisphosphate, the primary event in carbon dioxide fixation, as well as the oxidative fragmentation of the pentose substrate in the photorespiration process. Both reactions occur simultaneously and in competition at the same active site. The protein is Ribulose bisphosphate carboxylase large chain of Watsonia angusta.